The following is a 427-amino-acid chain: UDP-N-acetylglucosamine 1-carboxyvinyltransferase (427 aa).

Phosphoenolpyruvate is bound at residue 24–25; the sequence is KN. Residue arginine 95 coordinates UDP-N-acetyl-alpha-D-glucosamine. Cysteine 119 acts as the Proton donor in catalysis. Cysteine 119 carries the post-translational modification 2-(S-cysteinyl)pyruvic acid O-phosphothioketal. UDP-N-acetyl-alpha-D-glucosamine contacts are provided by residues 124 to 128, aspartate 308, and valine 330; that span reads RPVDQ.

The protein belongs to the EPSP synthase family. MurA subfamily.

The protein resides in the cytoplasm. The enzyme catalyses phosphoenolpyruvate + UDP-N-acetyl-alpha-D-glucosamine = UDP-N-acetyl-3-O-(1-carboxyvinyl)-alpha-D-glucosamine + phosphate. It participates in cell wall biogenesis; peptidoglycan biosynthesis. Cell wall formation. Adds enolpyruvyl to UDP-N-acetylglucosamine. The chain is UDP-N-acetylglucosamine 1-carboxyvinyltransferase from Deinococcus geothermalis (strain DSM 11300 / CIP 105573 / AG-3a).